Consider the following 455-residue polypeptide: Trigger factor (455 aa).

The 94-residue stretch at glycine 169–proline 262 folds into the PPIase FKBP-type domain.

This sequence belongs to the FKBP-type PPIase family. Tig subfamily.

It localises to the cytoplasm. It carries out the reaction [protein]-peptidylproline (omega=180) = [protein]-peptidylproline (omega=0). Functionally, involved in protein export. Acts as a chaperone by maintaining the newly synthesized protein in an open conformation. Functions as a peptidyl-prolyl cis-trans isomerase. This Rippkaea orientalis (strain PCC 8801 / RF-1) (Cyanothece sp. (strain PCC 8801)) protein is Trigger factor.